The following is a 493-amino-acid chain: Ketol-acid reductoisomerase (NADP(+)) (493 aa).

In terms of domain architecture, KARI N-terminal Rossmann spans 14-208; sequence LDQLGRCRFM…GGDRAGVLES (195 aa). Residues 45–48, Arg68, Arg76, Ser78, and 108–110 contribute to the NADP(+) site; these read CGAQ and DKQ. His132 is an active-site residue. Residue Gly158 participates in NADP(+) binding. 2 KARI C-terminal knotted domains span residues 209–345 and 346–486; these read SFVA…APKA and DGIK…MTDM. Residues Asp217, Glu221, Glu390, and Glu394 each contribute to the Mg(2+) site. Ser415 lines the substrate pocket.

It belongs to the ketol-acid reductoisomerase family. Mg(2+) serves as cofactor.

It catalyses the reaction (2R)-2,3-dihydroxy-3-methylbutanoate + NADP(+) = (2S)-2-acetolactate + NADPH + H(+). The catalysed reaction is (2R,3R)-2,3-dihydroxy-3-methylpentanoate + NADP(+) = (S)-2-ethyl-2-hydroxy-3-oxobutanoate + NADPH + H(+). The protein operates within amino-acid biosynthesis; L-isoleucine biosynthesis; L-isoleucine from 2-oxobutanoate: step 2/4. It participates in amino-acid biosynthesis; L-valine biosynthesis; L-valine from pyruvate: step 2/4. Its function is as follows. Involved in the biosynthesis of branched-chain amino acids (BCAA). Catalyzes an alkyl-migration followed by a ketol-acid reduction of (S)-2-acetolactate (S2AL) to yield (R)-2,3-dihydroxy-isovalerate. In the isomerase reaction, S2AL is rearranged via a Mg-dependent methyl migration to produce 3-hydroxy-3-methyl-2-ketobutyrate (HMKB). In the reductase reaction, this 2-ketoacid undergoes a metal-dependent reduction by NADPH to yield (R)-2,3-dihydroxy-isovalerate. This is Ketol-acid reductoisomerase (NADP(+)) from Mannheimia succiniciproducens (strain KCTC 0769BP / MBEL55E).